The chain runs to 186 residues: Peptidyl-tRNA hydrolase (186 aa).

Y13 serves as a coordination point for tRNA. The Proton acceptor role is filled by H18. Residues Y59, N61, and N107 each contribute to the tRNA site.

The protein belongs to the PTH family. In terms of assembly, monomer.

It localises to the cytoplasm. It catalyses the reaction an N-acyl-L-alpha-aminoacyl-tRNA + H2O = an N-acyl-L-amino acid + a tRNA + H(+). Hydrolyzes ribosome-free peptidyl-tRNAs (with 1 or more amino acids incorporated), which drop off the ribosome during protein synthesis, or as a result of ribosome stalling. In terms of biological role, catalyzes the release of premature peptidyl moieties from peptidyl-tRNA molecules trapped in stalled 50S ribosomal subunits, and thus maintains levels of free tRNAs and 50S ribosomes. This Thermotoga petrophila (strain ATCC BAA-488 / DSM 13995 / JCM 10881 / RKU-1) protein is Peptidyl-tRNA hydrolase.